We begin with the raw amino-acid sequence, 328 residues long: MSIFARVAGTGSYLPELRLTNQDLVERLAKTGLETSDEWIKTRSGISARHFAAENELTSDLAVRAAEAALSSTGINSADLDLIILATSTPDHLGGFPSTACVVQDKLGAHTSCAAFDVQAVCAGFTYALAVADAFIRSGSYKKVLVIGAETFSRILNFQDRGTCVLFGDGAGAVVLEASKEAGILSTVMHADGSQRDILCVPGRAGNGEVRGSPFMTMDGQAVFKLAVKVLEQVAHEALDKAKLKPEQIDWLVPHQANIRIMEGTAKKMGMSMDKVIVTVHEHGNTSAASIPLALDSGVRSGQIKRGQHLLLEGVGGGFAWGAVAIKY.

Active-site residues include Cys-122 and His-255. The interval 256–260 is ACP-binding; it reads QANIR. Residue Asn-285 is part of the active site.

It belongs to the thiolase-like superfamily. FabH family. In terms of assembly, homodimer.

It localises to the cytoplasm. The enzyme catalyses malonyl-[ACP] + acetyl-CoA + H(+) = 3-oxobutanoyl-[ACP] + CO2 + CoA. The protein operates within lipid metabolism; fatty acid biosynthesis. Catalyzes the condensation reaction of fatty acid synthesis by the addition to an acyl acceptor of two carbons from malonyl-ACP. Catalyzes the first condensation reaction which initiates fatty acid synthesis and may therefore play a role in governing the total rate of fatty acid production. Possesses both acetoacetyl-ACP synthase and acetyl transacylase activities. Its substrate specificity determines the biosynthesis of branched-chain and/or straight-chain of fatty acids. This Polynucleobacter necessarius subsp. necessarius (strain STIR1) protein is Beta-ketoacyl-[acyl-carrier-protein] synthase III.